We begin with the raw amino-acid sequence, 200 residues long: Flavin prenyltransferase UbiX (200 aa).

Residues 15 to 17 (GAS), Thr41, 102 to 105 (SMGT), and Arg137 contribute to the FMN site. 2 residues coordinate dimethylallyl phosphate: Tyr167 and Lys183.

This sequence belongs to the UbiX/PAD1 family.

The catalysed reaction is dimethylallyl phosphate + FMNH2 = prenylated FMNH2 + phosphate. Flavin prenyltransferase that catalyzes the synthesis of the prenylated FMN cofactor (prenyl-FMN) for 4-hydroxy-3-polyprenylbenzoic acid decarboxylase UbiD. The prenyltransferase is metal-independent and links a dimethylallyl moiety from dimethylallyl monophosphate (DMAP) to the flavin N5 and C6 atoms of FMN. The sequence is that of Flavin prenyltransferase UbiX from Alkalihalophilus pseudofirmus (strain ATCC BAA-2126 / JCM 17055 / OF4) (Bacillus pseudofirmus).